The chain runs to 107 residues: Ig kappa chain V-VI region XRPC 24 (107 aa).

The tract at residues glutamate 1–cysteine 23 is framework-1. Residues cysteine 23 and cysteine 87 are joined by a disulfide bond. A complementarity-determining-1 region spans residues serine 24–histidine 33. A framework-2 region spans residues tryptophan 34–tyrosine 48. The tract at residues glutamate 49 to serine 55 is complementarity-determining-2. A framework-3 region spans residues glycine 56 to cysteine 87. The complementarity-determining-3 stretch occupies residues glutamine 88–threonine 96. Positions phenylalanine 97 to lysine 106 are framework-4.

This is Ig kappa chain V-VI region XRPC 24 from Mus musculus (Mouse).